The following is a 251-amino-acid chain: uncharacterized protein (251 aa).

Valine 14 to valine 37 contributes to the NADP(+) binding site. Substrate is bound at residue serine 145. Tyrosine 158 (proton acceptor) is an active-site residue.

Belongs to the short-chain dehydrogenases/reductases (SDR) family.

May be involved in the biosynthesis of a heptaene-type antibiotic. This is an uncharacterized protein from Streptomyces coelicolor.